A 399-amino-acid chain; its full sequence is STOREKEEPER protein (399 aa).

Disordered regions lie at residues 1 to 160 (MAPK…RSLW) and 250 to 301 (GISN…EEQQ). The segment covering 20–54 (EEQELVEESQEEEEQQSREEEGEEESGEETEEDEE) has biased composition (acidic residues). A compositionally biased stretch (polar residues) spans 69 to 79 (KLVQTPQKPQF). Low complexity-rich tracts occupy residues 80-100 (SSES…SGNS) and 116-125 (AAKAATPSKP). Basic and acidic residues-rich tracts occupy residues 143-152 (KIAEEEEKKS) and 270-299 (KTVE…KEEE).

This sequence belongs to the GeBP family. Expressed in tubers and in leaves treated with sucrose.

The protein resides in the nucleus. Functionally, may act as a transcriptional regulator. Binds specifically to the B-box motif, a promoter element that is required for the tuber-specific and sucrose inducible expression of the patatin gene. The sequence is that of STOREKEEPER protein from Solanum tuberosum (Potato).